The primary structure comprises 408 residues: Phosphoenolpyruvate/phosphate translocator 1, chloroplastic (408 aa).

A chloroplast-targeting transit peptide spans 1-66 (MQSAAAVGLL…ISARRIGLVP (66 aa)). Transmembrane regions (helical) follow at residues 105-125 (TLQL…FNIY), 139-159 (ITNV…ITGI), 165-185 (ISGA…MGNL), 222-242 (PTPF…LASL), 245-262 (ASFN…NVTF), 283-303 (ITLF…VTLL), and 375-395 (TPVS…VFLY). Positions 124–241 (IYNKQVLKVF…PIVGGVALAS (118 aa)) constitute an EamA domain.

Belongs to the TPT transporter family. PPT (TC 2.A.7.9) subfamily.

It is found in the plastid. The protein resides in the chloroplast membrane. Functionally, phosphoenolpyruvate/phosphate translocator that transports phosphoenolpyruvate (PEP) and dihydroxyacetone phosphate. The chain is Phosphoenolpyruvate/phosphate translocator 1, chloroplastic (PPT1) from Oryza sativa subsp. japonica (Rice).